A 181-amino-acid polypeptide reads, in one-letter code: Histone deacetylase complex subunit SAP30L (181 aa).

The Atypical zinc finger occupies 26–74 (CCLIDGGERCPRPAGNASFSKRVQKSISQKKLKLDIDKSVRHLYICDFH). The disordered stretch occupies residues 82-103 (RNKRKRKTSDDGGDSPEHETDV). The Nuclear localization signal (NLS) signature appears at 83 to 88 (NKRKRK). Residues 85-87 (RKR) form an important for DNA and phosphoinositide binding region.

The protein belongs to the SAP30 family. In terms of assembly, interacts with components of the histone deacetylase complex sin3a, hdac1 and hdac2. Binds histones and nucleosomes.

The protein localises to the nucleus. Its subcellular location is the nucleolus. Its function is as follows. Functions as a transcription repressor, probably via its interaction with histone deacetylase complexes. Involved in the functional recruitment of the class 1 Sin3-histone deacetylase complex (HDAC) to the nucleolus. Binds DNA, apparently without sequence-specificity, and bends bound double-stranded DNA. Binds phosphoinositol phosphates (phosphoinositol 3-phosphate, phosphoinositol 4-phosphate and phosphoinositol 5-phosphate) via the same basic sequence motif that mediates DNA binding and nuclear import. In Xenopus tropicalis (Western clawed frog), this protein is Histone deacetylase complex subunit SAP30L (sap30l).